We begin with the raw amino-acid sequence, 397 residues long: Acetate kinase (397 aa).

N7 lines the Mg(2+) pocket. K14 is an ATP binding site. R90 contacts substrate. Catalysis depends on D147, which acts as the Proton donor/acceptor. Residues H207–G211, D282–R284, and G330–N334 contribute to the ATP site. Residue E384 participates in Mg(2+) binding.

Belongs to the acetokinase family. In terms of assembly, homodimer. The cofactor is Mg(2+). Mn(2+) is required as a cofactor.

The protein resides in the cytoplasm. The catalysed reaction is acetate + ATP = acetyl phosphate + ADP. It functions in the pathway metabolic intermediate biosynthesis; acetyl-CoA biosynthesis; acetyl-CoA from acetate: step 1/2. Its function is as follows. Catalyzes the formation of acetyl phosphate from acetate and ATP. Can also catalyze the reverse reaction. The chain is Acetate kinase from Agathobacter rectalis (strain ATCC 33656 / DSM 3377 / JCM 17463 / KCTC 5835 / VPI 0990) (Eubacterium rectale).